A 425-amino-acid chain; its full sequence is UDP-N-acetylglucosamine 1-carboxyvinyltransferase (425 aa).

Lysine 22–asparagine 23 is a binding site for phosphoenolpyruvate. Position 98 (arginine 98) interacts with UDP-N-acetyl-alpha-D-glucosamine. The active-site Proton donor is cysteine 122. 2-(S-cysteinyl)pyruvic acid O-phosphothioketal is present on cysteine 122. Residues arginine 127–glutamine 131, aspartate 313, and isoleucine 335 each bind UDP-N-acetyl-alpha-D-glucosamine.

It belongs to the EPSP synthase family. MurA subfamily.

The protein resides in the cytoplasm. It carries out the reaction phosphoenolpyruvate + UDP-N-acetyl-alpha-D-glucosamine = UDP-N-acetyl-3-O-(1-carboxyvinyl)-alpha-D-glucosamine + phosphate. Its pathway is cell wall biogenesis; peptidoglycan biosynthesis. In terms of biological role, cell wall formation. Adds enolpyruvyl to UDP-N-acetylglucosamine. The sequence is that of UDP-N-acetylglucosamine 1-carboxyvinyltransferase from Xylella fastidiosa (strain M23).